Reading from the N-terminus, the 301-residue chain is Protoheme IX farnesyltransferase 1 (301 aa).

Helical transmembrane passes span 29–49 (VVAL…PHAV), 51–71 (VQPL…AAAL), 101–121 (ALIF…SLVN), 123–143 (LTAW…TAYL), 150–170 (NIVI…TAVT), 177–197 (ALLL…ALAI), 223–243 (CILL…LVGM), 244–264 (CGPV…YKAW), and 275–295 (AMQV…ALLL).

This sequence belongs to the UbiA prenyltransferase family. Protoheme IX farnesyltransferase subfamily.

It is found in the cell inner membrane. It catalyses the reaction heme b + (2E,6E)-farnesyl diphosphate + H2O = Fe(II)-heme o + diphosphate. Its pathway is porphyrin-containing compound metabolism; heme O biosynthesis; heme O from protoheme: step 1/1. Functionally, converts heme B (protoheme IX) to heme O by substitution of the vinyl group on carbon 2 of heme B porphyrin ring with a hydroxyethyl farnesyl side group. The polypeptide is Protoheme IX farnesyltransferase 1 (Shewanella baltica (strain OS185)).